We begin with the raw amino-acid sequence, 358 residues long: Probable tartrate dehydrogenase/decarboxylase TtuC' (358 aa).

Residues Asp-222, Asp-246, and Asp-250 each coordinate Mn(2+).

The protein belongs to the isocitrate and isopropylmalate dehydrogenases family. Mg(2+) serves as cofactor. Requires Mn(2+) as cofactor. K(+) is required as a cofactor.

It is found in the cytoplasm. It carries out the reaction tartrate + NAD(+) = 2-hydroxy-3-oxosuccinate + NADH + H(+). It catalyses the reaction (2R,3S)-tartrate + NAD(+) = 2-hydroxy-3-oxosuccinate + NADH + H(+). The catalysed reaction is (2R,3R)-tartrate + NAD(+) = 2-hydroxy-3-oxosuccinate + NADH + H(+). The enzyme catalyses (2R,3R)-tartrate + H(+) = (R)-glycerate + CO2. It carries out the reaction (R)-malate + NAD(+) = pyruvate + CO2 + NADH. The protein operates within carbohydrate acid metabolism; tartrate degradation; 2-hydroxy-3-oxosuccinate from L-tartrate: step 1/1. It participates in carbohydrate acid metabolism; tartrate degradation; 2-hydroxy-3-oxosuccinate from meso-tartrate: step 1/1. Its pathway is carbohydrate acid metabolism; tartrate degradation; D-glycerate from L-tartrate: step 1/1. Has multiple catalytic activities. Apart from catalyzing the oxidation of (+)-tartrate to oxaloglycolate, also converts meso-tartrate to D-glycerate and catalyzes the oxidative decarboxylation of D-malate to pyruvate. This is Probable tartrate dehydrogenase/decarboxylase TtuC' (ttuC') from Agrobacterium vitis (Rhizobium vitis).